A 348-amino-acid polypeptide reads, in one-letter code: Phosphoribosylformylglycinamidine cyclo-ligase (348 aa).

This sequence belongs to the AIR synthase family.

It is found in the cytoplasm. It catalyses the reaction 2-formamido-N(1)-(5-O-phospho-beta-D-ribosyl)acetamidine + ATP = 5-amino-1-(5-phospho-beta-D-ribosyl)imidazole + ADP + phosphate + H(+). It participates in purine metabolism; IMP biosynthesis via de novo pathway; 5-amino-1-(5-phospho-D-ribosyl)imidazole from N(2)-formyl-N(1)-(5-phospho-D-ribosyl)glycinamide: step 2/2. In Geobacter metallireducens (strain ATCC 53774 / DSM 7210 / GS-15), this protein is Phosphoribosylformylglycinamidine cyclo-ligase.